A 436-amino-acid polypeptide reads, in one-letter code: Probable mediator of RNA polymerase II transcription subunit 26b (436 aa).

Residues 71 to 111 form a disordered region; it reads PGDDEANRGTTGNGGGGTAVDEDYEVAGGSKESKANSSRGD. One can recognise a TFIIS N-terminal domain in the interval 139 to 214; sequence KEVARIKEIL…AEWKELVDQW (76 aa). Residues 263–376 form a disordered region; it reads HFFDSLDFDG…PQQEKLKGLD (114 aa). Basic and acidic residues-rich tracts occupy residues 276 to 290 and 332 to 350; these read NSEEHNTSREHERRP and TEQRMKNETVSVHKSEKPM. Positions 382 to 402 form a coiled coil; that stretch reads EFAKRKLQESYQHHENAKKQR. Positions 408–436 are disordered; that stretch reads EMIPKQGSAQKPQLKRPGMSNRNWANGRK. The span at 427–436 shows a compositional bias: polar residues; the sequence is SNRNWANGRK.

It belongs to the Mediator complex subunit 26 family. Component of the Mediator complex.

The protein resides in the nucleus. Functionally, component of the Mediator complex, a coactivator involved in the regulated transcription of nearly all RNA polymerase II-dependent genes. Mediator functions as a bridge to convey information from gene-specific regulatory proteins to the basal RNA polymerase II transcription machinery. The Mediator complex, having a compact conformation in its free form, is recruited to promoters by direct interactions with regulatory proteins and serves for the assembly of a functional preinitiation complex with RNA polymerase II and the general transcription factors. May play a role in transcription elongation. This chain is Probable mediator of RNA polymerase II transcription subunit 26b (MED26B), found in Arabidopsis thaliana (Mouse-ear cress).